A 156-amino-acid polypeptide reads, in one-letter code: Snaclec trimecetin subunit alpha (156 aa).

A signal peptide spans 1–23 (MGRFIFVSFGLLVVFLSLSGTGA). 3 cysteine pairs are disulfide-bonded: C25-C36, C53-C150, and C125-C142. The C-type lectin domain occupies 32–151 (FRRYCYKPFK…CGERNLFMCK (120 aa)).

It belongs to the snaclec family. Heterodimer of subunits alpha and beta; disulfide-linked. As to expression, expressed by the venom gland.

It localises to the secreted. Its function is as follows. Snaclec that induces platelet aggregation in either human platelet rich plasma (PRP) or washed platelet suspensions. It causes aggregation in a dose-dependent manner even in the absence of various platelet agonists such as ADP or von Willebrand factor (vWF). Interestingly, it does not induce aggregation in rabbit PRP. A monoclonal antibody against the platelet GPIb receptor blocks the aggregation induced by trimecetin, suggesting that it acts by binding to GPIb (GP1BA/GP1BB). This chain is Snaclec trimecetin subunit alpha, found in Protobothrops mucrosquamatus (Taiwan habu).